The chain runs to 286 residues: uncharacterized protein (286 aa).

The protein belongs to the chlamydial CPn_0389/CT_041/TC_0311 family.

This is an uncharacterized protein from Chlamydia muridarum (strain MoPn / Nigg).